A 324-amino-acid chain; its full sequence is Glyoxylate/hydroxypyruvate reductase B (324 aa).

Catalysis depends on residues R237 and E266. The active-site Proton donor is the H285.

Belongs to the D-isomer specific 2-hydroxyacid dehydrogenase family. GhrB subfamily. Homodimer.

The protein resides in the cytoplasm. It catalyses the reaction glycolate + NADP(+) = glyoxylate + NADPH + H(+). The enzyme catalyses (R)-glycerate + NAD(+) = 3-hydroxypyruvate + NADH + H(+). It carries out the reaction (R)-glycerate + NADP(+) = 3-hydroxypyruvate + NADPH + H(+). Functionally, catalyzes the NADPH-dependent reduction of glyoxylate and hydroxypyruvate into glycolate and glycerate, respectively. This is Glyoxylate/hydroxypyruvate reductase B from Salmonella dublin (strain CT_02021853).